A 103-amino-acid polypeptide reads, in one-letter code: Integration host factor subunit beta (103 aa).

Positions Arg-62–Lys-81 are disordered.

It belongs to the bacterial histone-like protein family. As to quaternary structure, heterodimer of an alpha and a beta chain.

In terms of biological role, this protein is one of the two subunits of integration host factor, a specific DNA-binding protein that functions in genetic recombination as well as in transcriptional and translational control. This Xanthomonas campestris pv. campestris (strain B100) protein is Integration host factor subunit beta.